The sequence spans 292 residues: 4-hydroxy-tetrahydrodipicolinate synthase (292 aa).

Residue threonine 45 participates in pyruvate binding. Residue tyrosine 133 is the Proton donor/acceptor of the active site. The active-site Schiff-base intermediate with substrate is the lysine 161. Isoleucine 203 serves as a coordination point for pyruvate.

This sequence belongs to the DapA family. Homotetramer; dimer of dimers.

It is found in the cytoplasm. It catalyses the reaction L-aspartate 4-semialdehyde + pyruvate = (2S,4S)-4-hydroxy-2,3,4,5-tetrahydrodipicolinate + H2O + H(+). Its pathway is amino-acid biosynthesis; L-lysine biosynthesis via DAP pathway; (S)-tetrahydrodipicolinate from L-aspartate: step 3/4. In terms of biological role, catalyzes the condensation of (S)-aspartate-beta-semialdehyde [(S)-ASA] and pyruvate to 4-hydroxy-tetrahydrodipicolinate (HTPA). The sequence is that of 4-hydroxy-tetrahydrodipicolinate synthase from Salmonella typhi.